The primary structure comprises 129 residues: Glycine cleavage system H protein (129 aa).

Residues 24-106 (SYTVGITEHA…YGEGWFFRVM (83 aa)) form the Lipoyl-binding domain. Position 65 is an N6-lipoyllysine (Lys-65).

It belongs to the GcvH family. In terms of assembly, the glycine cleavage system is composed of four proteins: P, T, L and H. Requires (R)-lipoate as cofactor.

In terms of biological role, the glycine cleavage system catalyzes the degradation of glycine. The H protein shuttles the methylamine group of glycine from the P protein to the T protein. This Shewanella oneidensis (strain ATCC 700550 / JCM 31522 / CIP 106686 / LMG 19005 / NCIMB 14063 / MR-1) protein is Glycine cleavage system H protein.